The primary structure comprises 401 residues: Imidazolonepropionase (401 aa).

Fe(3+) contacts are provided by His-66 and His-68. Zn(2+) is bound by residues His-66 and His-68. 3 residues coordinate 4-imidazolone-5-propanoate: Arg-75, Tyr-138, and His-171. Residue Tyr-138 participates in N-formimidoyl-L-glutamate binding. Position 236 (His-236) interacts with Fe(3+). His-236 is a binding site for Zn(2+). Gln-239 provides a ligand contact to 4-imidazolone-5-propanoate. Asp-311 is a binding site for Fe(3+). Asp-311 is a binding site for Zn(2+). Positions 313 and 315 each coordinate N-formimidoyl-L-glutamate. Position 316 (Thr-316) interacts with 4-imidazolone-5-propanoate.

The protein belongs to the metallo-dependent hydrolases superfamily. HutI family. Zn(2+) is required as a cofactor. Requires Fe(3+) as cofactor.

The protein localises to the cytoplasm. The catalysed reaction is 4-imidazolone-5-propanoate + H2O = N-formimidoyl-L-glutamate. The protein operates within amino-acid degradation; L-histidine degradation into L-glutamate; N-formimidoyl-L-glutamate from L-histidine: step 3/3. In terms of biological role, catalyzes the hydrolytic cleavage of the carbon-nitrogen bond in imidazolone-5-propanoate to yield N-formimidoyl-L-glutamate. It is the third step in the universal histidine degradation pathway. The sequence is that of Imidazolonepropionase from Pseudomonas fluorescens (strain ATCC BAA-477 / NRRL B-23932 / Pf-5).